The sequence spans 118 residues: NADH-ubiquinone oxidoreductase chain 3 (118 aa).

Helical transmembrane passes span 7 to 27 (IFIY…LPFL), 62 to 82 (LVSI…PWAV), and 87 to 107 (IDLF…IGFL).

This sequence belongs to the complex I subunit 3 family.

Its subcellular location is the mitochondrion membrane. The enzyme catalyses a ubiquinone + NADH + 5 H(+)(in) = a ubiquinol + NAD(+) + 4 H(+)(out). Its function is as follows. Core subunit of the mitochondrial membrane respiratory chain NADH dehydrogenase (Complex I) that is believed to belong to the minimal assembly required for catalysis. Complex I functions in the transfer of electrons from NADH to the respiratory chain. The immediate electron acceptor for the enzyme is believed to be ubiquinone. The polypeptide is NADH-ubiquinone oxidoreductase chain 3 (ND3) (Allium cepa (Onion)).